The primary structure comprises 575 residues: Adenine deaminase (575 aa).

Belongs to the metallo-dependent hydrolases superfamily. Adenine deaminase family. Mn(2+) serves as cofactor.

The enzyme catalyses adenine + H2O + H(+) = hypoxanthine + NH4(+). In Nitratidesulfovibrio vulgaris (strain DP4) (Desulfovibrio vulgaris), this protein is Adenine deaminase.